Consider the following 305-residue polypeptide: Glycine--tRNA ligase alpha subunit (305 aa).

The protein belongs to the class-II aminoacyl-tRNA synthetase family. As to quaternary structure, tetramer of two alpha and two beta subunits.

The protein localises to the cytoplasm. It catalyses the reaction tRNA(Gly) + glycine + ATP = glycyl-tRNA(Gly) + AMP + diphosphate. The sequence is that of Glycine--tRNA ligase alpha subunit from Streptococcus pyogenes serotype M4 (strain MGAS10750).